Reading from the N-terminus, the 520-residue chain is MNSGPGPVGGRPGGRGGPAVQQNIPSNLLQDHENQRLFELLGRKCWTLATTVVQLYLALPPGAEHWTMEHCGAVCFVKDNPQKSYFIRLYGLQAGRLLWEQELYSQLVYLTPTPFFHTFAGDDCQVGLNFADESEAQAFRALVQEKIQKRNQRQSGERRQLPPPPAPINEERRGGLPPVPPHPGGDHGGPSGGPLSLGLVTVDIQNPDITSSRYRGLPAPGPGPTDKKRSGKKKISKADIGAPSGFKHVSHVGWDPQNGFDVNNLDPDLRSLFSRAGISEAQLTDAETSKLIYDFIEDQGGLEAVRQEMRRQEPLPPPPPPCRGGGGGGGGGGGGGGGGGGQPLRPPVVGSNKGRSGPLPPVPMGGAPPPPTPRGPPPPGRGGPPPPPPPATGRSGPPPPPLPGAGGPPAPPPPPPPPPPPPCPGSGPAPPPLPPTPVSGGSPAPGGGRGALLDQIRQGIQLNKTPGALENSVQQPPAQQSEGLVGALMHVMQKRSRVIHSSDEGEDQTGEDEEDDEWDD.

Residues 1-17 (MNSGPGPVGGRPGGRGG) show a composition bias toward gly residues. Disordered stretches follow at residues 1–23 (MNSG…VQQN) and 148–247 (QKRN…SGFK). Residues 41–150 (LGRKCWTLAT…ALVQEKIQKR (110 aa)) enclose the WH1 domain. Over residues 203–213 (DIQNPDITSSR) the composition is skewed to polar residues. Residues 240-253 (IGAPSGFKHVSHVG) enclose the CRIB domain. At Y293 the chain carries Phosphotyrosine. Positions 307 to 520 (QEMRRQEPLP…EDEEDDEWDD (214 aa)) are disordered. Over residues 323–342 (RGGGGGGGGGGGGGGGGGGQ) the composition is skewed to gly residues. GRSGPLPPXP motif repeat units follow at residues 354-363 (GRSGPLPPVP) and 393-402 (GRSGPPPPPL). Residues 358 to 437 (PLPPVPMGGA…PAPPPLPPTP (80 aa)) are compositionally biased toward pro residues. In terms of domain architecture, WH2 spans 448–465 (GRGALLDQIRQGIQLNKT). Residues 471–482 (NSVQQPPAQQSE) are compositionally biased toward polar residues. Phosphoserine occurs at positions 501 and 502. The span at 504–520 (EGEDQTGEDEEDDEWDD) shows a compositional bias: acidic residues.

In terms of assembly, binds the Arp2/3 complex. Interacts with CDC42, RAC, NCK, HCK, FYN, SRC kinase FGR, BTK, ABL1, PSTPIP1, WIP, and to the p85 subunit of PLC-gamma. Interacts (via C-terminus) with ALDOA. Interacts with NCK1 (via SH3 domains). Interacts with FCHSD2. Post-translationally, phosphorylated at Tyr-293 by FYN and HCK, inducing WAS effector activity after TCR engagement. Phosphorylation at Tyr-293 enhances WAS activity in promoting actin polymerization and filopodia formation.

The protein resides in the cytoplasm. The protein localises to the cytoskeleton. It is found in the nucleus. In terms of biological role, effector protein for Rho-type GTPases that regulates actin filament reorganization via its interaction with the Arp2/3 complex. Important for efficient actin polymerization. Possible regulator of lymphocyte and platelet function. Mediates actin filament reorganization and the formation of actin pedestals upon infection by pathogenic bacteria. In addition to its role in the cytoplasmic cytoskeleton, also promotes actin polymerization in the nucleus, thereby regulating gene transcription and repair of damaged DNA. Promotes homologous recombination (HR) repair in response to DNA damage by promoting nuclear actin polymerization, leading to drive motility of double-strand breaks (DSBs). The protein is Actin nucleation-promoting factor WAS (Was) of Mus musculus (Mouse).